The primary structure comprises 366 residues: Latent membrane protein 1 (366 aa).

The Cytoplasmic portion of the chain corresponds to 1-23; the sequence is MERDLERGPPGPPRPPLGPPLSS. A helical transmembrane segment spans residues 24–44; sequence SIGLALLLLLLALLFWLYIVL. Residues 45-51 lie on the Extracellular side of the membrane; sequence SNWTGGA. Residues 52 to 72 traverse the membrane as a helical segment; it reads LLVLYSFALMLIIIILIIFIF. Residues 73-75 are Cytoplasmic-facing; the sequence is RRD. The chain crosses the membrane as a helical span at residues 76 to 96; sequence LLCPLGGLGLLLLMVTLLLIA. Over 97–106 the chain is Extracellular; it reads LWNLHGQALY. A helical membrane pass occupies residues 107–127; the sequence is LGIVLFIFGCLLVLGLWIYFL. Topologically, residues 128–139 are cytoplasmic; the sequence is EILWRLGATIWQ. A helical membrane pass occupies residues 140 to 160; that stretch reads LLAFILAFFLAIILLIIALYL. Topologically, residues 161-163 are extracellular; that stretch reads QQN. Residues 164-184 traverse the membrane as a helical segment; it reads WWTLLVDLLWLLLFMAILIWM. The Cytoplasmic portion of the chain corresponds to 185-366; the sequence is YFHGPRHTDE…HGPVQLSYYD (182 aa). The tract at residues 194–232 is CTAR1; the sequence is EHHHDDSLPHPQQATDDSSHESDSNSNEGRHHLLVSGAG. The tract at residues 194–366 is disordered; that stretch reads EHHHDDSLPH…HGPVQLSYYD (173 aa). The Interaction with host TRAF proteins motif lies at 204–208; the sequence is PQQAT. Residues 210–224 show a composition bias toward basic and acidic residues; it reads DSSHESDSNSNEGRH. 2 stretches are compositionally biased toward low complexity: residues 251–267 and 337–346; these read NGPQ…PQDP and PHLPTLLLGT. The CTAR2 stretch occupies residues 332–366; that stretch reads GGGGDPHLPTLLLGTSGSGGDDDDPHGPVQLSYYD.

This sequence belongs to the herpesviridae LMP-1 family. As to quaternary structure, interacts (via PXQXT motif) with host tumor necrosis factor receptor-associated factor (TRAF) proteins TRAF1, TRAF2, TRAF3 and TRAF5. Interacts with human protein ZMYND11; leading to negatively regulate NF-kappa-B activation. Interacts with host UBE2I; this interaction induces the sumoylation of various cellular proteins. Interacts with host IRF7. In terms of processing, ubiquitinated on the N-terminus.

It localises to the host cell membrane. Functionally, acts as a CD40 functional homolog to prevent apoptosis of infected B-lymphocytes and drive their proliferation. Functions as a constitutively active tumor necrosis factor receptor that induces the activation of several signaling pathways, including those of the NF-kappa-B family. LMP1 signaling leads to up-regulation of antiapoptotic proteins and provide growth signals in latently infected cells. Interacts with host UBE2I and subsequently affects the sumoylation state of several cellular proteins. For example, induces the sumoylation of host IRF7 thereby limiting its transcriptional activity and modulating the activation of innate immune responses. Also inhibits host IFN-alpha-stimulated STAT2 nuclear translocation and interferon-stimulated response element transcriptional activity by interacting with and inhibiting host TYK2. Induces SUMO expression during viral latency thereby dysregulating the host sumoylation processes. The polypeptide is Latent membrane protein 1 (LMP1) (Homo sapiens (Human)).